A 644-amino-acid chain; its full sequence is Probable potassium transport system protein Kup (644 aa).

12 consecutive transmembrane segments (helical) span residues 10 to 30 (GGAT…GDIG), 56 to 76 (ILSL…AWVI), 106 to 126 (WWIL…GVIT), 143 to 163 (PAWK…LFMV), 175 to 195 (FGPS…TWIV), 212 to 232 (FFGI…LAVT), 252 to 272 (AWYF…GALL), 282 to 302 (PFFM…SGIA), 343 to 363 (IYLP…ILWF), 371 to 391 (FAYG…VFFV), 403 to 423 (AGLF…ANLL), and 425 to 445 (FVEG…TMST).

Belongs to the HAK/KUP transporter (TC 2.A.72) family.

The protein localises to the cell inner membrane. It catalyses the reaction K(+)(in) + H(+)(in) = K(+)(out) + H(+)(out). Its function is as follows. Transport of potassium into the cell. Likely operates as a K(+):H(+) symporter. The sequence is that of Probable potassium transport system protein Kup from Acidithiobacillus ferrooxidans (strain ATCC 23270 / DSM 14882 / CIP 104768 / NCIMB 8455) (Ferrobacillus ferrooxidans (strain ATCC 23270)).